A 793-amino-acid chain; its full sequence is Cation channel sperm-associated auxiliary subunit delta (793 aa).

The N-terminal stretch at 1 to 20 (MLMLMLVAAVTMWLRPLVTA) is a signal peptide. The Extracellular portion of the chain corresponds to 21–725 (QPLCRARTVR…AFPVQLVSAG (705 aa)). Disulfide bonds link Cys24-Cys370, Cys60-Cys146, Cys145-Cys153, Cys388-Cys497, Cys511-Cys703, Cys526-Cys573, and Cys625-Cys653. The N-linked (GlcNAc...) asparagine glycan is linked to Asn128. 5 N-linked (GlcNAc...) asparagine glycosylation sites follow: Asn231, Asn241, Asn473, Asn539, and Asn631. Residues 726–747 (VVMVLLISSILGSVWLAYMIPR) form a helical membrane-spanning segment. Residues 748-793 (LLRTARGRRMTSFVAQLYGRCKTVCQFRASATARTGSKPMGRHRSS) are Cytoplasmic-facing.

The protein belongs to the CATSPERD family. As to quaternary structure, component of the CatSper complex or CatSpermasome composed of the core pore-forming members CATSPER1, CATSPER2, CATSPER3 and CATSPER4 as well as auxiliary members CATSPERB, CATSPERG, CATSPERD, CATSPERE, CATSPERZ, C2CD6/CATSPERT, TMEM249, TMEM262 and EFCAB9. HSPA1 may be an additional auxiliary complex member. The core complex members CATSPER1, CATSPER2, CATSPER3 and CATSPER4 form a heterotetrameric channel. The auxiliary CATSPERB, CATSPERG, CATSPERD and CATSPERE subunits form a pavilion-like structure over the pore which stabilizes the complex through interactions with CATSPER4, CATSPER3, CATSPER1 and CATSPER2 respectively. TMEM262/CATSPERH interacts with CATSPERB, further stabilizing the complex. C2CD6/CATSPERT interacts at least with CATSPERD and is required for targeting the CatSper complex in the flagellar membrane.

It localises to the cell projection. Its subcellular location is the cilium. The protein localises to the flagellum membrane. Its function is as follows. Auxiliary component of the CatSper complex, a complex involved in sperm cell hyperactivation. Sperm cell hyperactivation is needed for sperm motility which is essential late in the preparation of sperm for fertilization. Required for CATSPER1 stability before intraflagellar transport and/or incorporation of the CatSper complex channel into the flagellar membrane. The chain is Cation channel sperm-associated auxiliary subunit delta from Macaca fascicularis (Crab-eating macaque).